A 255-amino-acid chain; its full sequence is 3-deoxy-manno-octulosonate cytidylyltransferase (255 aa).

It belongs to the KdsB family.

Its subcellular location is the cytoplasm. It carries out the reaction 3-deoxy-alpha-D-manno-oct-2-ulosonate + CTP = CMP-3-deoxy-beta-D-manno-octulosonate + diphosphate. It participates in nucleotide-sugar biosynthesis; CMP-3-deoxy-D-manno-octulosonate biosynthesis; CMP-3-deoxy-D-manno-octulosonate from 3-deoxy-D-manno-octulosonate and CTP: step 1/1. The protein operates within bacterial outer membrane biogenesis; lipopolysaccharide biosynthesis. In terms of biological role, activates KDO (a required 8-carbon sugar) for incorporation into bacterial lipopolysaccharide in Gram-negative bacteria. This chain is 3-deoxy-manno-octulosonate cytidylyltransferase, found in Hahella chejuensis (strain KCTC 2396).